The sequence spans 647 residues: Threonine--tRNA ligase (647 aa).

The TGS domain maps to 1 to 63 (MDKINITFPD…EEDGSIEIVT (63 aa)). The tract at residues 242-540 (DHRKIGKELD…LTEETKGAFP (299 aa)) is catalytic. Residues cysteine 336, histidine 387, and histidine 517 each contribute to the Zn(2+) site.

The protein belongs to the class-II aminoacyl-tRNA synthetase family. Homodimer. Zn(2+) serves as cofactor.

The protein localises to the cytoplasm. It catalyses the reaction tRNA(Thr) + L-threonine + ATP = L-threonyl-tRNA(Thr) + AMP + diphosphate + H(+). In terms of biological role, catalyzes the attachment of threonine to tRNA(Thr) in a two-step reaction: L-threonine is first activated by ATP to form Thr-AMP and then transferred to the acceptor end of tRNA(Thr). Also edits incorrectly charged L-seryl-tRNA(Thr). The chain is Threonine--tRNA ligase from Staphylococcus carnosus (strain TM300).